The sequence spans 382 residues: 3-dehydroquinate synthase (382 aa).

Residues 115–119 (GVVGD), 139–140 (TS), K152, and K161 each bind NAD(+). Residues E194, H256, and H274 each coordinate Zn(2+).

Belongs to the sugar phosphate cyclases superfamily. Dehydroquinate synthase family. It depends on Co(2+) as a cofactor. Zn(2+) is required as a cofactor. Requires NAD(+) as cofactor.

The protein localises to the cytoplasm. It catalyses the reaction 7-phospho-2-dehydro-3-deoxy-D-arabino-heptonate = 3-dehydroquinate + phosphate. It participates in metabolic intermediate biosynthesis; chorismate biosynthesis; chorismate from D-erythrose 4-phosphate and phosphoenolpyruvate: step 2/7. Its function is as follows. Catalyzes the conversion of 3-deoxy-D-arabino-heptulosonate 7-phosphate (DAHP) to dehydroquinate (DHQ). This Rhodopseudomonas palustris (strain BisB18) protein is 3-dehydroquinate synthase.